Here is a 145-residue protein sequence, read N- to C-terminus: D-aminoacyl-tRNA deacylase (145 aa).

A Gly-cisPro motif, important for rejection of L-amino acids motif is present at residues 137-138 (GP).

The protein belongs to the DTD family. Homodimer.

It is found in the cytoplasm. It carries out the reaction glycyl-tRNA(Ala) + H2O = tRNA(Ala) + glycine + H(+). The enzyme catalyses a D-aminoacyl-tRNA + H2O = a tRNA + a D-alpha-amino acid + H(+). Functionally, an aminoacyl-tRNA editing enzyme that deacylates mischarged D-aminoacyl-tRNAs. Also deacylates mischarged glycyl-tRNA(Ala), protecting cells against glycine mischarging by AlaRS. Acts via tRNA-based rather than protein-based catalysis; rejects L-amino acids rather than detecting D-amino acids in the active site. By recycling D-aminoacyl-tRNA to D-amino acids and free tRNA molecules, this enzyme counteracts the toxicity associated with the formation of D-aminoacyl-tRNA entities in vivo and helps enforce protein L-homochirality. The protein is D-aminoacyl-tRNA deacylase of Yersinia enterocolitica serotype O:8 / biotype 1B (strain NCTC 13174 / 8081).